The sequence spans 303 residues: Diaminopimelate epimerase (303 aa).

Substrate is bound by residues asparagine 15 and asparagine 72. Cysteine 81 (proton donor) is an active-site residue. Residues 82–83, asparagine 169, asparagine 202, and 220–221 each bind substrate; these read GN and ER. Cysteine 229 functions as the Proton acceptor in the catalytic mechanism. Substrate is bound at residue 230–231; it reads GT.

Belongs to the diaminopimelate epimerase family. As to quaternary structure, homodimer.

It is found in the cytoplasm. It carries out the reaction (2S,6S)-2,6-diaminopimelate = meso-2,6-diaminopimelate. It functions in the pathway amino-acid biosynthesis; L-lysine biosynthesis via DAP pathway; DL-2,6-diaminopimelate from LL-2,6-diaminopimelate: step 1/1. Functionally, catalyzes the stereoinversion of LL-2,6-diaminopimelate (L,L-DAP) to meso-diaminopimelate (meso-DAP), a precursor of L-lysine and an essential component of the bacterial peptidoglycan. The polypeptide is Diaminopimelate epimerase (Prochlorococcus marinus (strain MIT 9313)).